Here is a 79-residue protein sequence, read N- to C-terminus: Cytochrome c oxidase assembly factor 6 homolog (79 aa).

The CHCH domain occupies 9–52; it reads RQACWGARDEYWKCLDENTEDASKCKKLRSSFESSCPQQWIKYF. A Cx9C motif motif is present at residues 12-22; sequence CWGARDEYWKC. Cystine bridges form between Cys-12–Cys-44 and Cys-22–Cys-33. A Cx10C motif motif is present at residues 33 to 44; it reads CKKLRSSFESSC.

This sequence belongs to the cytochrome c oxidase subunit 6B family. Found in a complex with TMEM177, COX20, MT-CO2/COX2, COX18, SCO1 and SCO2. Interacts with COA1, MT-CO2/COX2, SCO1, SCO2 and COX20. Interacts with COX20 in a MT-CO2/COX2- and COX18-dependent manner. Interacts with COX16.

Its subcellular location is the mitochondrion intermembrane space. Its function is as follows. Involved in the maturation of the mitochondrial respiratory chain complex IV subunit MT-CO2/COX2. Thereby, may regulate early steps of complex IV assembly. Mitochondrial respiratory chain complex IV or cytochrome c oxidase is the component of the respiratory chain that catalyzes the transfer of electrons from intermembrane space cytochrome c to molecular oxygen in the matrix and as a consequence contributes to the proton gradient involved in mitochondrial ATP synthesis. May also be required for efficient formation of respiratory supercomplexes comprised of complexes III and IV. The sequence is that of Cytochrome c oxidase assembly factor 6 homolog (COA6) from Bos taurus (Bovine).